The following is a 320-amino-acid chain: ATP-dependent 6-phosphofructokinase (320 aa).

Gly-12 is an ATP binding site. Residues 22 to 26 (RGVVR) and 55 to 60 (RYSVSD) contribute to the ADP site. ATP is bound by residues 73 to 74 (RF) and 103 to 106 (GDGS). Asp-104 provides a ligand contact to Mg(2+). 126-128 (TID) is a substrate binding site. Asp-128 acts as the Proton acceptor in catalysis. Arg-155 is an ADP binding site. Substrate-binding positions include Arg-163 and 170-172 (MGR). ADP-binding positions include 186–188 (GCE), Lys-212, and 214–216 (KKH). Residues Glu-223, Arg-244, and 250–253 (HIQR) contribute to the substrate site.

This sequence belongs to the phosphofructokinase type A (PFKA) family. ATP-dependent PFK group I subfamily. Prokaryotic clade 'B1' sub-subfamily. Homotetramer. Requires Mg(2+) as cofactor.

It localises to the cytoplasm. The catalysed reaction is beta-D-fructose 6-phosphate + ATP = beta-D-fructose 1,6-bisphosphate + ADP + H(+). Its pathway is carbohydrate degradation; glycolysis; D-glyceraldehyde 3-phosphate and glycerone phosphate from D-glucose: step 3/4. Its activity is regulated as follows. Allosterically activated by ADP and other diphosphonucleosides, and allosterically inhibited by phosphoenolpyruvate. In terms of biological role, catalyzes the phosphorylation of D-fructose 6-phosphate to fructose 1,6-bisphosphate by ATP, the first committing step of glycolysis. The sequence is that of ATP-dependent 6-phosphofructokinase from Sodalis glossinidius (strain morsitans).